Consider the following 336-residue polypeptide: tRNA-cytidine(32) 2-sulfurtransferase (336 aa).

Over residues 11–23 (TAAAPAGTGEATP) the composition is skewed to low complexity. Residues 11–31 (TAAAPAGTGEATPVHARARSP) are disordered. The short motif at 75–80 (SGGKDS) is the PP-loop motif element. [4Fe-4S] cluster contacts are provided by cysteine 150, cysteine 153, and cysteine 241.

The protein belongs to the TtcA family. As to quaternary structure, homodimer. The cofactor is Mg(2+). It depends on [4Fe-4S] cluster as a cofactor.

It localises to the cytoplasm. The enzyme catalyses cytidine(32) in tRNA + S-sulfanyl-L-cysteinyl-[cysteine desulfurase] + AH2 + ATP = 2-thiocytidine(32) in tRNA + L-cysteinyl-[cysteine desulfurase] + A + AMP + diphosphate + H(+). The protein operates within tRNA modification. Its function is as follows. Catalyzes the ATP-dependent 2-thiolation of cytidine in position 32 of tRNA, to form 2-thiocytidine (s(2)C32). The sulfur atoms are provided by the cysteine/cysteine desulfurase (IscS) system. In Paraburkholderia xenovorans (strain LB400), this protein is tRNA-cytidine(32) 2-sulfurtransferase.